Consider the following 249-residue polypeptide: tRNA pseudouridine synthase A (249 aa).

Aspartate 52 (nucleophile) is an active-site residue. Tyrosine 111 lines the substrate pocket.

Belongs to the tRNA pseudouridine synthase TruA family. In terms of assembly, homodimer.

The catalysed reaction is uridine(38/39/40) in tRNA = pseudouridine(38/39/40) in tRNA. Its function is as follows. Formation of pseudouridine at positions 38, 39 and 40 in the anticodon stem and loop of transfer RNAs. This is tRNA pseudouridine synthase A from Maricaulis maris (strain MCS10) (Caulobacter maris).